The sequence spans 426 residues: Pyrophosphate--fructose 6-phosphate 1-phosphotransferase 1 (426 aa).

Gly15 lines the diphosphate pocket. Position 114 (Asp114) interacts with Mg(2+). Substrate-binding positions include 140–142, 186–188, Glu247, and 308–311; these read TID, MGR, and YELR. Asp142 acts as the Proton acceptor in catalysis.

Belongs to the phosphofructokinase type A (PFKA) family. PPi-dependent PFK group II subfamily. Clade 'Short' sub-subfamily. Homotetramer. It depends on Mg(2+) as a cofactor.

It localises to the cytoplasm. It catalyses the reaction beta-D-fructose 6-phosphate + diphosphate = beta-D-fructose 1,6-bisphosphate + phosphate + H(+). Its pathway is carbohydrate degradation; glycolysis; D-glyceraldehyde 3-phosphate and glycerone phosphate from D-glucose: step 3/4. Its activity is regulated as follows. Non-allosteric. In terms of biological role, catalyzes the phosphorylation of D-fructose 6-phosphate, the first committing step of glycolysis. Uses inorganic phosphate (PPi) as phosphoryl donor instead of ATP like common ATP-dependent phosphofructokinases (ATP-PFKs), which renders the reaction reversible, and can thus function both in glycolysis and gluconeogenesis. Consistently, PPi-PFK can replace the enzymes of both the forward (ATP-PFK) and reverse (fructose-bisphosphatase (FBPase)) reactions. The chain is Pyrophosphate--fructose 6-phosphate 1-phosphotransferase 1 (Pfk1) from Trichomonas vaginalis (strain ATCC PRA-98 / G3).